Here is a 282-residue protein sequence, read N- to C-terminus: Bis(5'-nucleosyl)-tetraphosphatase, symmetrical (282 aa).

Belongs to the Ap4A hydrolase family.

The enzyme catalyses P(1),P(4)-bis(5'-adenosyl) tetraphosphate + H2O = 2 ADP + 2 H(+). In terms of biological role, hydrolyzes diadenosine 5',5'''-P1,P4-tetraphosphate to yield ADP. The protein is Bis(5'-nucleosyl)-tetraphosphatase, symmetrical of Burkholderia thailandensis (strain ATCC 700388 / DSM 13276 / CCUG 48851 / CIP 106301 / E264).